A 562-amino-acid polypeptide reads, in one-letter code: Phosphoacetylglucosamine mutase (562 aa).

S74 acts as the Phosphoserine intermediate in catalysis. Residues S74, D291, D293, and D295 each contribute to the Mg(2+) site. Residues 395-397 (EAN), 526-530 (RPSGT), and R535 contribute to the substrate site.

It belongs to the phosphohexose mutase family. Requires Mg(2+) as cofactor.

The catalysed reaction is N-acetyl-alpha-D-glucosamine 1-phosphate = N-acetyl-D-glucosamine 6-phosphate. It participates in nucleotide-sugar biosynthesis; UDP-N-acetyl-alpha-D-glucosamine biosynthesis; N-acetyl-alpha-D-glucosamine 1-phosphate from alpha-D-glucosamine 6-phosphate (route I): step 2/2. Its function is as follows. Interconverts GlcNAc-6-P and GlcNAc-1-P. The protein is Phosphoacetylglucosamine mutase of Oryza sativa subsp. japonica (Rice).